The chain runs to 138 residues: ATP synthase epsilon chain (138 aa).

The protein belongs to the ATPase epsilon chain family. As to quaternary structure, F-type ATPases have 2 components, CF(1) - the catalytic core - and CF(0) - the membrane proton channel. CF(1) has five subunits: alpha(3), beta(3), gamma(1), delta(1), epsilon(1). CF(0) has three main subunits: a, b and c.

It localises to the cell inner membrane. Its function is as follows. Produces ATP from ADP in the presence of a proton gradient across the membrane. The polypeptide is ATP synthase epsilon chain (Bartonella henselae (strain ATCC 49882 / DSM 28221 / CCUG 30454 / Houston 1) (Rochalimaea henselae)).